The primary structure comprises 622 residues: Chaperone protein HscA homolog (622 aa).

It belongs to the heat shock protein 70 family.

Functionally, chaperone involved in the maturation of iron-sulfur cluster-containing proteins. Has a low intrinsic ATPase activity which is markedly stimulated by HscB. The chain is Chaperone protein HscA homolog from Aromatoleum aromaticum (strain DSM 19018 / LMG 30748 / EbN1) (Azoarcus sp. (strain EbN1)).